The primary structure comprises 309 residues: Ornithine carbamoyltransferase (309 aa).

Carbamoyl phosphate-binding positions include 51 to 54, Q78, R102, and 129 to 132; these read STRT and HPCQ. Residues N161, D225, and 229-230 each bind L-ornithine; that span reads SM. Carbamoyl phosphate is bound by residues 265–266 and R293; that span reads CL.

Belongs to the aspartate/ornithine carbamoyltransferase superfamily. OTCase family.

The protein localises to the cytoplasm. It catalyses the reaction carbamoyl phosphate + L-ornithine = L-citrulline + phosphate + H(+). It participates in amino-acid biosynthesis; L-arginine biosynthesis; L-arginine from L-ornithine and carbamoyl phosphate: step 1/3. Functionally, reversibly catalyzes the transfer of the carbamoyl group from carbamoyl phosphate (CP) to the N(epsilon) atom of ornithine (ORN) to produce L-citrulline. This is Ornithine carbamoyltransferase from Mycolicibacterium paratuberculosis (strain ATCC BAA-968 / K-10) (Mycobacterium paratuberculosis).